Consider the following 232-residue polypeptide: Adenosylcobinamide-GDP ribazoletransferase (232 aa).

7 helical membrane-spanning segments follow: residues 24–44 (LWAFPLVSLVSSIIPIAILYL), 46–66 (IPLANVLALLSLYFVIGLLHL), 96–116 (IAGVFAVVVVLFLQVYSLSML), 117–137 (PFYAIYIAELNSKFSMLLGLA), 153–173 (GMNGRQLAIGVVLYVLLYLPV), 174–194 (VIYDPSALFGVMGLVFAWYVI), and 210–230 (GAMAEITRAGTLVILSFSLCF).

It belongs to the CobS family. Mg(2+) serves as cofactor.

It localises to the cell membrane. The catalysed reaction is alpha-ribazole + adenosylcob(III)inamide-GDP = adenosylcob(III)alamin + GMP + H(+). The enzyme catalyses alpha-ribazole 5'-phosphate + adenosylcob(III)inamide-GDP = adenosylcob(III)alamin 5'-phosphate + GMP + H(+). It functions in the pathway cofactor biosynthesis; adenosylcobalamin biosynthesis; adenosylcobalamin from cob(II)yrinate a,c-diamide: step 7/7. In terms of biological role, joins adenosylcobinamide-GDP and alpha-ribazole to generate adenosylcobalamin (Ado-cobalamin). Also synthesizes adenosylcobalamin 5'-phosphate from adenosylcobinamide-GDP and alpha-ribazole 5'-phosphate. The protein is Adenosylcobinamide-GDP ribazoletransferase of Pyrococcus abyssi (strain GE5 / Orsay).